We begin with the raw amino-acid sequence, 507 residues long: Chromosomal replication initiator protein DnaA (507 aa).

The interval 1–112 (MTDDPGSGFT…PATDEADDTT (112 aa)) is domain I, interacts with DnaA modulators. The interval 99-155 (RIAPPATDEADDTTVPPSENPATTSPDTTTDNDEIDDSAAARGDNQHSWPSYFTERP) is disordered. Over residues 113–127 (VPPSENPATTSPDTT) the composition is skewed to polar residues. A domain II region spans residues 113-166 (VPPSENPATTSPDTTTDNDEIDDSAAARGDNQHSWPSYFTERPHNTDSATAGVT). A domain III, AAA+ region region spans residues 167–383 (SLNRRYTFDT…GALIRVTAFA (217 aa)). Residues Gly-211, Gly-213, Lys-214, and Thr-215 each coordinate ATP. The interval 384-507 (SLNKTPIDKA…TTRIRQRSKR (124 aa)) is domain IV, binds dsDNA.

Belongs to the DnaA family. In terms of assembly, oligomerizes as a right-handed, spiral filament on DNA at oriC.

The protein localises to the cytoplasm. Plays an essential role in the initiation and regulation of chromosomal replication. ATP-DnaA binds to the origin of replication (oriC) to initiate formation of the DNA replication initiation complex once per cell cycle. Binds the DnaA box (a 9 base pair repeat at the origin) and separates the double-stranded (ds)DNA. Forms a right-handed helical filament on oriC DNA; dsDNA binds to the exterior of the filament while single-stranded (ss)DNA is stabiized in the filament's interior. The ATP-DnaA-oriC complex binds and stabilizes one strand of the AT-rich DNA unwinding element (DUE), permitting loading of DNA polymerase. After initiation quickly degrades to an ADP-DnaA complex that is not apt for DNA replication. Binds acidic phospholipids. This is Chromosomal replication initiator protein DnaA from Mycobacterium tuberculosis (strain ATCC 25177 / H37Ra).